A 320-amino-acid polypeptide reads, in one-letter code: Cytochrome f (320 aa).

Residues 1–35 (MQNRNTFSWVKEEMTRFISVSIMIYVITRTSISNA) form the signal peptide. Positions 36, 56, 59, and 60 each coordinate heme. Residues 286 to 306 (VQGLLFFLASVILAQIFLVLK) form a helical membrane-spanning segment.

This sequence belongs to the cytochrome f family. In terms of assembly, the 4 large subunits of the cytochrome b6-f complex are cytochrome b6, subunit IV (17 kDa polypeptide, petD), cytochrome f and the Rieske protein, while the 4 small subunits are PetG, PetL, PetM and PetN. The complex functions as a dimer. The cofactor is heme.

Its subcellular location is the plastid. The protein resides in the chloroplast thylakoid membrane. Its function is as follows. Component of the cytochrome b6-f complex, which mediates electron transfer between photosystem II (PSII) and photosystem I (PSI), cyclic electron flow around PSI, and state transitions. The chain is Cytochrome f from Calycanthus floridus var. glaucus (Eastern sweetshrub).